The primary structure comprises 93 residues: MPKSKVRKKNDFTITSVSRTPVKVKVGPSSVWFVTLFVGLMLIGLVWLMVFQLAALGTQAPTALHWMAQLGPWNYAIAFAFMITGLLLTMRWH.

The next 2 membrane-spanning stretches (helical) occupy residues 31–51 (VWFV…LMVF) and 70–90 (LGPW…LLTM).

The protein belongs to the CrgA family.

The protein resides in the cell membrane. Functionally, involved in cell division. This Mycobacterium leprae (strain Br4923) protein is Cell division protein CrgA.